The primary structure comprises 116 residues: UPF0482 protein ECA2253 (116 aa).

An N-terminal signal peptide occupies residues methionine 1 to alanine 31.

The protein belongs to the UPF0482 family.

The chain is UPF0482 protein ECA2253 from Pectobacterium atrosepticum (strain SCRI 1043 / ATCC BAA-672) (Erwinia carotovora subsp. atroseptica).